A 1066-amino-acid chain; its full sequence is Vinculin (1066 aa).

The segment at 1–835 (MPVFHTRTIE…GAVAKVREAF (835 aa)) is N-terminal globular head. Ser-97 carries the phosphoserine modification. The talin-interaction stretch occupies residues 168–208 (MTKMAKMIDERQQELTHQEHRVMLVNSMNTVKELLPVLISA). The residue at position 173 (Lys-173) is an N6-acetyllysine. Tandem repeats lie at residues 259–369 (ASKD…KVEN), 370–479 (AARK…KTNR), and 480–589 (AVAN…QMQE). Residues 259–589 (ASKDTEAMKR…LKDLKAQMQE (331 aa)) are 3 X 112 AA tandem repeats. Residues Ser-260, Ser-272, Ser-275, Ser-290, Ser-346, and Ser-434 each carry the phosphoserine modification. At Lys-496 the chain carries N6-acetyllysine. Phosphotyrosine is present on Tyr-537. Residues Ser-574, Ser-579, and Ser-600 each carry the phosphoserine modification. Residues Thr-604 and Thr-672 each carry the phosphothreonine modification. Position 721 is a phosphoserine (Ser-721). Residues 741 to 764 (MANIQPQMLVAGATSIARRANRIL) are interaction with ACTN4. Ser-795 and Ser-809 each carry phosphoserine. At Tyr-822 the chain carries Phosphotyrosine. The tract at residues 836 to 878 (QPQEPDFPPPPPDLEQLRLTDELAPPKPPLPEGEVPPPRPPPP) is linker (Pro-rich). A disordered region spans residues 857–887 (ELAPPKPPLPEGEVPPPRPPPPEEKDEEFPE). Residues 860–876 (PPKPPLPEGEVPPPRPP) show a composition bias toward pro residues. The interval 879–1066 (EEKDEEFPEQ…RWVRKTPWYQ (188 aa)) is C-terminal tail. Facilitates phospholipid membrane insertion stretches follow at residues 935–978 (RLVR…KRIR) and 1052–1066 (AGFT…PWYQ). Tyr-1065 bears the Phosphotyrosine; by SRC-type Tyr-kinases mark.

This sequence belongs to the vinculin/alpha-catenin family. In terms of assembly, exhibits self-association properties. Part of a complex composed of THSD1, PTK2/FAK1, TLN1 and VCL. Interacts with APBB1IP, NRAP and TLN1. Interacts with SYNM. Interacts with CTNNB1 and this interaction is necessary for its localization to the cell-cell junctions and for its function in regulating cell surface expression of E-cadherin. Interacts with SORBS1. Interacts with SYNM. Interacts with CTNNA1. Binds to ACTN4; this interaction triggers conformational changes. Interacts with FLII. Post-translationally, phosphorylated; on serines, threonines and tyrosines. Phosphorylation on Tyr-1065 in activated platelets affects head-tail interactions and cell spreading but has no effect on actin binding nor on localization to focal adhesion plaques. Acetylated; mainly by myristic acid but also by a small amount of palmitic acid.

The protein resides in the cell membrane. The protein localises to the cell junction. It is found in the adherens junction. Its subcellular location is the focal adhesion. It localises to the cytoplasm. The protein resides in the cytoskeleton. The protein localises to the sarcolemma. It is found in the cell projection. Its subcellular location is the podosome. Actin filament (F-actin)-binding protein involved in cell-matrix adhesion and cell-cell adhesion. Regulates cell-surface E-cadherin expression and potentiates mechanosensing by the E-cadherin complex. May also play important roles in cell morphology and locomotion. In Mus musculus (Mouse), this protein is Vinculin (Vcl).